The primary structure comprises 367 residues: MEVKSAKELKRISKELQENFLNRWKLLNLEQDKDRLKSLTEKAEDPNLWNNPEEARLVSQKKNELEKKLNPWFTIQQDILDFPDLVDLTLDEKGENGVGELSSEYNRLQEKFEELELLGALKNPEDLKPAFLNIHPGAGGTESQDWAEMLLRMYTRYFEKKGYQYSLIDVQAGDGAGIKNATLHVIGDFAFGFLKGENGVHRLVRISPFDANKRRHTSFVSVHVSPEIDDDIDIKIEEKDIRVDVYRSSGAGGQHVNTTDSAVRITHMPSGIVVACQNERSQIKNRDTAFKMLKARLYELEQEKAKEELEKKSGEKKDITWGSQIRSYVFHPYNLVKDHRTDHETGNVAAVMDGDIEPFILAYLKTL.

Q254 bears the N5-methylglutamine mark.

The protein belongs to the prokaryotic/mitochondrial release factor family. In terms of processing, methylated by PrmC. Methylation increases the termination efficiency of RF2.

Its subcellular location is the cytoplasm. Functionally, peptide chain release factor 2 directs the termination of translation in response to the peptide chain termination codons UGA and UAA. This Leptospira interrogans serogroup Icterohaemorrhagiae serovar copenhageni (strain Fiocruz L1-130) protein is Peptide chain release factor 2.